We begin with the raw amino-acid sequence, 226 residues long: uncharacterized protein (226 aa).

The Response regulatory domain occupies 1 to 112 (MLVEDDHSIS…ELTARVKAAI (112 aa)). 4-aspartylphosphate is present on aspartate 48. The segment at residues 126–225 (NKVIRIHQLA…LWGIGYKLGE (100 aa)) is a DNA-binding region (ompR/PhoB-type).

In terms of processing, phosphorylated by YcbM.

It is found in the cytoplasm. Member of the two-component regulatory system YcbM/YcbL. This is an uncharacterized protein from Bacillus subtilis (strain 168).